A 152-amino-acid chain; its full sequence is SsrA-binding protein (152 aa).

Basic and acidic residues predominate over residues 129-140 (KREDMKKKDSQR). Positions 129-152 (KREDMKKKDSQRELSQALKSKNRE) are disordered. Polar residues predominate over residues 141-152 (ELSQALKSKNRE).

It belongs to the SmpB family.

The protein resides in the cytoplasm. Functionally, required for rescue of stalled ribosomes mediated by trans-translation. Binds to transfer-messenger RNA (tmRNA), required for stable association of tmRNA with ribosomes. tmRNA and SmpB together mimic tRNA shape, replacing the anticodon stem-loop with SmpB. tmRNA is encoded by the ssrA gene; the 2 termini fold to resemble tRNA(Ala) and it encodes a 'tag peptide', a short internal open reading frame. During trans-translation Ala-aminoacylated tmRNA acts like a tRNA, entering the A-site of stalled ribosomes, displacing the stalled mRNA. The ribosome then switches to translate the ORF on the tmRNA; the nascent peptide is terminated with the 'tag peptide' encoded by the tmRNA and targeted for degradation. The ribosome is freed to recommence translation, which seems to be the essential function of trans-translation. The protein is SsrA-binding protein of Pelobacter propionicus (strain DSM 2379 / NBRC 103807 / OttBd1).